We begin with the raw amino-acid sequence, 181 residues long: ATP synthase subunit delta (181 aa).

It belongs to the ATPase delta chain family. In terms of assembly, F-type ATPases have 2 components, F(1) - the catalytic core - and F(0) - the membrane proton channel. F(1) has five subunits: alpha(3), beta(3), gamma(1), delta(1), epsilon(1). F(0) has three main subunits: a(1), b(2) and c(10-14). The alpha and beta chains form an alternating ring which encloses part of the gamma chain. F(1) is attached to F(0) by a central stalk formed by the gamma and epsilon chains, while a peripheral stalk is formed by the delta and b chains.

Its subcellular location is the cell inner membrane. F(1)F(0) ATP synthase produces ATP from ADP in the presence of a proton or sodium gradient. F-type ATPases consist of two structural domains, F(1) containing the extramembraneous catalytic core and F(0) containing the membrane proton channel, linked together by a central stalk and a peripheral stalk. During catalysis, ATP synthesis in the catalytic domain of F(1) is coupled via a rotary mechanism of the central stalk subunits to proton translocation. In terms of biological role, this protein is part of the stalk that links CF(0) to CF(1). It either transmits conformational changes from CF(0) to CF(1) or is implicated in proton conduction. The chain is ATP synthase subunit delta from Chlorobium limicola (strain DSM 245 / NBRC 103803 / 6330).